A 204-amino-acid polypeptide reads, in one-letter code: Large ribosomal subunit protein uL13 (204 aa).

This sequence belongs to the universal ribosomal protein uL13 family.

In Spodoptera frugiperda (Fall armyworm), this protein is Large ribosomal subunit protein uL13 (RpL13A).